Consider the following 292-residue polypeptide: Hydroxysqualene synthase (292 aa).

It belongs to the phytoene/squalene synthase family. HpnC subfamily.

The catalysed reaction is presqualene diphosphate + H2O = hydroxysqualene + diphosphate. It functions in the pathway secondary metabolite biosynthesis; hopanoid biosynthesis. Its function is as follows. Involved in the biosynthesis of the hopanoid precursor squalene (SQ) from farnesyl diphosphate (FPP). Catalyzes the second step, the conversion of presqualene diphosphate (PSPP) to hydroxysqualene (HSQ). This Rhodopseudomonas palustris (strain ATCC BAA-98 / CGA009) protein is Hydroxysqualene synthase.